The sequence spans 262 residues: MDFLNDDELDLDLPVTAEISKELFATEIEKYRESETNGTDVDNFDVDRFLVQKNFHYLPLDSLIRDLSGLSQKMVQTLLEQIRSNYDDYLTFSNTYTDEENETLINLEKTQSDLQKFMTQLDHLIKDDISNTQEIIKDVLEYLKKLDEIYGSLRNHSQLTEALSLGKRLSKSLHEMCGIEPLEEEICSGLIEQLYKLITASRRILESCADSNSPYIHHLRNDYQDLLQEFQISLKILTEKCLENPSSLQNLSLTLVSIIKTA.

In terms of assembly, component of the conserved oligomeric Golgi (COG or Sec34/Sec35) complex which consists of eight different proteins COG1-COG8. The COG complex interacts with the Rab GTPase YPT1, the Glogi SNAREs GOS1, SEC22, SED5, VTI1 and YKT6 and the COPI coatomer subunit gamma SEC21.

It is found in the golgi apparatus membrane. Functionally, acts as a component of the peripheral membrane COG complex that is involved in intra-Golgi protein trafficking. COG is located at the cis-Golgi, and regulates tethering of retrograde intra-Golgi vesicles and possibly a number of other membrane trafficking events. COG2 is required for ER to Golgi vesicle docking. Not essential for viability. The polypeptide is Conserved oligomeric Golgi complex subunit 2 (COG2) (Saccharomyces cerevisiae (strain ATCC 204508 / S288c) (Baker's yeast)).